A 130-amino-acid chain; its full sequence is MSTPRIALIAHDAKKDEIVALAGAYRAALAQCRLVATGTTGGRIAQAHGLDVERKLSGPLGGDLQIGAELADGRVDIVIFLRDPMTAQPHDPDITALVRACDVHDVPVATNVATARVLLDDLARRLPVKA.

The MGS-like domain occupies 1–130 (MSTPRIALIA…DLARRLPVKA (130 aa)). Substrate-binding positions include H11, K15, 37-40 (TGTT), and 57-58 (SG). Catalysis depends on D63, which acts as the Proton donor/acceptor. H90 contacts substrate.

This sequence belongs to the methylglyoxal synthase family.

It catalyses the reaction dihydroxyacetone phosphate = methylglyoxal + phosphate. Functionally, catalyzes the formation of methylglyoxal from dihydroxyacetone phosphate. The protein is Methylglyoxal synthase of Burkholderia thailandensis (strain ATCC 700388 / DSM 13276 / CCUG 48851 / CIP 106301 / E264).